Here is a 328-residue protein sequence, read N- to C-terminus: Tetraacyldisaccharide 4'-kinase (328 aa).

55–62 (TAGGNGKT) contacts ATP.

It belongs to the LpxK family.

It catalyses the reaction a lipid A disaccharide + ATP = a lipid IVA + ADP + H(+). Its pathway is glycolipid biosynthesis; lipid IV(A) biosynthesis; lipid IV(A) from (3R)-3-hydroxytetradecanoyl-[acyl-carrier-protein] and UDP-N-acetyl-alpha-D-glucosamine: step 6/6. Its function is as follows. Transfers the gamma-phosphate of ATP to the 4'-position of a tetraacyldisaccharide 1-phosphate intermediate (termed DS-1-P) to form tetraacyldisaccharide 1,4'-bis-phosphate (lipid IVA). This chain is Tetraacyldisaccharide 4'-kinase, found in Yersinia enterocolitica serotype O:8 / biotype 1B (strain NCTC 13174 / 8081).